A 202-amino-acid polypeptide reads, in one-letter code: Probable GTP-binding protein EngB (202 aa).

Positions 26 to 200 (VSKEIAFTGS…KAQLDSWFSI (175 aa)) constitute an EngB-type G domain. Residues 34 to 41 (GSSNVGKS), 61 to 65 (GSTKT), 79 to 82 (DLPG), 146 to 149 (NKAD), and 179 to 181 (FSS) contribute to the GTP site. Mg(2+) is bound by residues S41 and T63.

The protein belongs to the TRAFAC class TrmE-Era-EngA-EngB-Septin-like GTPase superfamily. EngB GTPase family. Requires Mg(2+) as cofactor.

In terms of biological role, necessary for normal cell division and for the maintenance of normal septation. The protein is Probable GTP-binding protein EngB of Baumannia cicadellinicola subsp. Homalodisca coagulata.